A 212-amino-acid chain; its full sequence is MSLFDKKHLVSPADALPGRNTPMPVATLHAVNGHSMTNVPDGMEIAIFAMGCFWGVERLFWQLPGVYSTAAGYTGGYTPNPTYREVCSGDTGHAEAVRIVYDPSVISYEQLLQVFWENHDPAQGMRQGNDHSTQYRSAIYPLTPEQDAAARASLERFQAAMLAADDDRRITTEIANATPFYYAEDDHQQYLHKNPYGYCGIGGIGVCLPPEA.

The active site involves Cys52.

It belongs to the MsrA Met sulfoxide reductase family.

It catalyses the reaction L-methionyl-[protein] + [thioredoxin]-disulfide + H2O = L-methionyl-(S)-S-oxide-[protein] + [thioredoxin]-dithiol. It carries out the reaction [thioredoxin]-disulfide + L-methionine + H2O = L-methionine (S)-S-oxide + [thioredoxin]-dithiol. Has an important function as a repair enzyme for proteins that have been inactivated by oxidation. Catalyzes the reversible oxidation-reduction of methionine sulfoxide in proteins to methionine. The sequence is that of Peptide methionine sulfoxide reductase MsrA from Escherichia coli O6:K15:H31 (strain 536 / UPEC).